A 65-amino-acid chain; its full sequence is MPKIKTNRAAAKRFRKTASGKYKCGHANRSHILTKKATKRKRNLRQTNHVRAEDAGRLDRMLPYL.

The protein belongs to the bacterial ribosomal protein bL35 family.

The protein is Large ribosomal subunit protein bL35 of Xanthomonas campestris pv. campestris (strain ATCC 33913 / DSM 3586 / NCPPB 528 / LMG 568 / P 25).